The sequence spans 283 residues: Undecaprenyl-diphosphatase (283 aa).

7 consecutive transmembrane segments (helical) span residues 1-21 (MDII…FLPI), 40-60 (GAAF…IYFY), 85-105 (SRMG…GLLF), 117-137 (YIIS…EYLV), 196-216 (FSFL…LLKV), 232-252 (VATV…LDYL), and 258-278 (YLFI…LSMG).

Belongs to the UppP family.

It localises to the cell inner membrane. It catalyses the reaction di-trans,octa-cis-undecaprenyl diphosphate + H2O = di-trans,octa-cis-undecaprenyl phosphate + phosphate + H(+). Functionally, catalyzes the dephosphorylation of undecaprenyl diphosphate (UPP). Confers resistance to bacitracin. In Chloroherpeton thalassium (strain ATCC 35110 / GB-78), this protein is Undecaprenyl-diphosphatase.